We begin with the raw amino-acid sequence, 80 residues long: Phosphoribosylformylglycinamidine synthase subunit PurS (80 aa).

The protein belongs to the PurS family. In terms of assembly, homodimer. Part of the FGAM synthase complex composed of 1 PurL, 1 PurQ and 2 PurS subunits.

The protein localises to the cytoplasm. The enzyme catalyses N(2)-formyl-N(1)-(5-phospho-beta-D-ribosyl)glycinamide + L-glutamine + ATP + H2O = 2-formamido-N(1)-(5-O-phospho-beta-D-ribosyl)acetamidine + L-glutamate + ADP + phosphate + H(+). It participates in purine metabolism; IMP biosynthesis via de novo pathway; 5-amino-1-(5-phospho-D-ribosyl)imidazole from N(2)-formyl-N(1)-(5-phospho-D-ribosyl)glycinamide: step 1/2. Its function is as follows. Part of the phosphoribosylformylglycinamidine synthase complex involved in the purines biosynthetic pathway. Catalyzes the ATP-dependent conversion of formylglycinamide ribonucleotide (FGAR) and glutamine to yield formylglycinamidine ribonucleotide (FGAM) and glutamate. The FGAM synthase complex is composed of three subunits. PurQ produces an ammonia molecule by converting glutamine to glutamate. PurL transfers the ammonia molecule to FGAR to form FGAM in an ATP-dependent manner. PurS interacts with PurQ and PurL and is thought to assist in the transfer of the ammonia molecule from PurQ to PurL. The sequence is that of Phosphoribosylformylglycinamidine synthase subunit PurS from Archaeoglobus fulgidus (strain ATCC 49558 / DSM 4304 / JCM 9628 / NBRC 100126 / VC-16).